We begin with the raw amino-acid sequence, 146 residues long: Large ribosomal subunit protein uL13 (146 aa).

This sequence belongs to the universal ribosomal protein uL13 family. As to quaternary structure, part of the 50S ribosomal subunit.

This protein is one of the early assembly proteins of the 50S ribosomal subunit, although it is not seen to bind rRNA by itself. It is important during the early stages of 50S assembly. The sequence is that of Large ribosomal subunit protein uL13 from Malacoplasma penetrans (strain HF-2) (Mycoplasma penetrans).